We begin with the raw amino-acid sequence, 226 residues long: B-cell antigen receptor complex-associated protein alpha chain (226 aa).

The N-terminal stretch at 1 to 32 (MPGGPGVLQALPATIFLLFLLSAVYLGPGCQA) is a signal peptide. Positions 33–116 (LWMHKVPASL…RVQEGNESYQ (84 aa)) constitute an Ig-like C2-type domain. The Extracellular portion of the chain corresponds to 33 to 143 (LWMHKVPASL…LDMGEGTKNR (111 aa)). The cysteines at positions 54 and 106 are disulfide-linked. 6 N-linked (GlcNAc...) asparagine glycosylation sites follow: Asn-57, Asn-63, Asn-73, Asn-88, Asn-97, and Asn-112. A helical membrane pass occupies residues 144-165 (IITAEGIILLFCAVVPGTLLLF). Over 166 to 226 (RKRWQNEKLG…NIGDVQLEKP (61 aa)) the chain is Cytoplasmic. The ITAM domain maps to 177-205 (DAGDEYEDENLYEGLNLDDCSMYEDISRG). A phosphotyrosine; by SRC-type Tyr-kinases mark is found at Tyr-188 and Tyr-199. Arg-204 is subject to Asymmetric dimethylarginine; by PRMT1. Position 210 is a phosphotyrosine; by Tyr-kinases (Tyr-210).

Heterodimer of alpha and beta chains; disulfide-linked. Part of the B-cell antigen receptor complex where the alpha/beta chain heterodimer is non-covalently associated with an antigen-specific membrane-bound surface immunoglobulin of two heavy chains and two light chains. Interacts through its phosphorylated ITAM domain with the SH2 domains of SYK which stimulates SYK autophosphorylation and activation. Also interacts, when phosphorylated on Tyr-210, with the SH2 domain of BLNK/SLP65, bringing BLNK into proximity with SYK and allowing SYK to phosphorylate BLNK which is necessary for trafficking of the BCR to late endosomes. Interacts with Src-family tyrosine kinases including FYN and LYN, increasing their activity. Post-translationally, phosphorylated on tyrosine, serine and threonine residues upon B-cell activation. Phosphorylation of tyrosine residues by Src-family kinases is an early and essential feature of the BCR signaling cascade. The phosphorylated tyrosines serve as docking sites for SH2-domain containing kinases, leading to their activation which in turn leads to phosphorylation of downstream targets. Phosphorylated by LYN. Phosphorylation of serine and threonine residues may prevent subsequent tyrosine phosphorylation. Arginine methylation in the ITAM domain may interfere with the binding of SYK. It promotes signals leading to B-cell differentiation. B-cells.

It is found in the cell membrane. Its function is as follows. Required in cooperation with CD79B for initiation of the signal transduction cascade activated by binding of antigen to the B-cell antigen receptor complex (BCR) which leads to internalization of the complex, trafficking to late endosomes and antigen presentation. Also required for BCR surface expression and for efficient differentiation of pro- and pre-B-cells. Stimulates SYK autophosphorylation and activation. Binds to BLNK, bringing BLNK into proximity with SYK and allowing SYK to phosphorylate BLNK. Also interacts with and increases activity of some Src-family tyrosine kinases. Represses BCR signaling during development of immature B-cells. The sequence is that of B-cell antigen receptor complex-associated protein alpha chain (CD79A) from Homo sapiens (Human).